The primary structure comprises 46 residues: Esculentin-1 (46 aa).

A disulfide bridge connects residues cysteine 40 and cysteine 46.

Belongs to the frog skin active peptide (FSAP) family. Brevinin subfamily. In terms of tissue distribution, expressed by the skin glands.

It localises to the secreted. Functionally, shows antibacterial activity against representative Gram-negative and Gram-positive bacterial species, and hemolytic activity. The chain is Esculentin-1 from Pelophylax lessonae (Pool frog).